The sequence spans 225 residues: Transcriptional activator protein BglJ (225 aa).

The HTH luxR-type domain occupies 146-211 (YINQSRTLSP…GLLEAADILL (66 aa)). Positions 170–189 (MTQIAEQLKRNIKTIRAHKF) form a DNA-binding region, H-T-H motif.

In terms of assembly, forms a complex with RcsB; genetically both BglJ and RcsB are required to relieve bgl operon repression by H-NS and by StpA.

A crytic transcriptional activator. When its expression is induced it relieves H-NS repression of the bgl operon. Acts independently of transcription factor LeuO. The sequence is that of Transcriptional activator protein BglJ (bglJ) from Escherichia coli (strain K12).